We begin with the raw amino-acid sequence, 88 residues long: MYNKEIKEEIIKEYQTKEGDTGSPEVQVALLTYRINYLTEHLKSHKNDHHSRRGLFKMIGKRRNLLNYLSNKDIERYRDLIKRLNIRR.

Belongs to the universal ribosomal protein uS15 family. Part of the 30S ribosomal subunit. Forms a bridge to the 50S subunit in the 70S ribosome, contacting the 23S rRNA.

In terms of biological role, one of the primary rRNA binding proteins, it binds directly to 16S rRNA where it helps nucleate assembly of the platform of the 30S subunit by binding and bridging several RNA helices of the 16S rRNA. Its function is as follows. Forms an intersubunit bridge (bridge B4) with the 23S rRNA of the 50S subunit in the ribosome. This chain is Small ribosomal subunit protein uS15, found in Finegoldia magna (strain ATCC 29328 / DSM 20472 / WAL 2508) (Peptostreptococcus magnus).